Consider the following 381-residue polypeptide: Sulfofructose kinase (381 aa).

ATP-binding positions include glycine 10, 72–73, and 100–103; these read RY and GNGT. Asparagine 101 is a Mg(2+) binding site. The active-site Proton acceptor is the aspartate 131.

Belongs to the phosphofructokinase type A (PFKA) family. Mg(2+) is required as a cofactor.

It carries out the reaction 6-deoxy-6-sulfo-D-fructose + ATP = 6-deoxy-6-sulfo-D-fructose 1-phosphate + ADP + H(+). Functionally, part of the sulfo-EMP2 pathway, a D-sulfoquinovose degradation pathway that produces sulfolactate (SL). Phosphorylates 6-deoxy-6-sulfo-D-fructose (SF) to 6-deoxy-6-sulfo-D-fructose 1-phosphate (SFP). This is Sulfofructose kinase from Alkalicoccus urumqiensis (Bacillus urumqiensis).